A 325-amino-acid polypeptide reads, in one-letter code: Aldo-keto reductase family 1 member A1 (325 aa).

Ala2 is subject to N-acetylalanine. Phosphoserine is present on Ser4. NADP(+) contacts are provided by residues Gly11–Gly20, Thr21, and Trp22. Ser38 carries the post-translational modification Phosphoserine. NADP(+) is bound at residue Asp45. The active-site Proton donor is Tyr50. Lys127 carries the N6-acetyllysine; alternate modification. Lys127 carries the N6-succinyllysine; alternate modification. 12 residues coordinate NADP(+): Ser162, Asn163, Ser211, Leu213, Ser215, Ser216, Lys263, Ser264, Val265, Thr266, Arg269, and Asn273. A Phosphoserine modification is found at Ser211.

Belongs to the aldo/keto reductase family. In terms of assembly, monomer.

The protein resides in the cytoplasm. It localises to the cytosol. It is found in the apical cell membrane. The catalysed reaction is a primary alcohol + NADP(+) = an aldehyde + NADPH + H(+). The enzyme catalyses L-gulonate + NADP(+) = aldehydo-D-glucuronate + NADPH + H(+). It catalyses the reaction L-gulono-1,4-lactone + NADP(+) = D-glucurono-3,6-lactone + NADPH + H(+). It carries out the reaction allyl alcohol + NADP(+) = acrolein + NADPH + H(+). The catalysed reaction is glycerol + NADP(+) = D-glyceraldehyde + NADPH + H(+). The enzyme catalyses glycerol + NADP(+) = L-glyceraldehyde + NADPH + H(+). It catalyses the reaction hydroxyacetone + NADP(+) = methylglyoxal + NADPH + H(+). It carries out the reaction 3-deoxyfructose + NADP(+) = 3-deoxyglucosone + NADPH + H(+). The catalysed reaction is (R)-mevalonate + NADP(+) = (R)-mevaldate + NADPH + H(+). The enzyme catalyses pyridine 3-methanol + NADP(+) = pyridine-3-carbaldehyde + NADPH + H(+). It catalyses the reaction S-nitroso-CoA + NADPH + H(+) = sulfinamide-CoA + NADP(+). It carries out the reaction S-nitrosoglutathione + NADPH + H(+) = S-(hydroxysulfenamide)glutathione + NADP(+). Functionally, catalyzes the NADPH-dependent reduction of a wide variety of carbonyl-containing compounds to their corresponding alcohols. Displays enzymatic activity towards endogenous metabolites such as aromatic and aliphatic aldehydes, ketones, monosaccharides and bile acids, with a preference for negatively charged substrates, such as glucuronate and succinic semialdehyde. Plays an important role in ascorbic acid biosynthesis by catalyzing the reduction of D-glucuronic acid and D-glucurono-gamma-lactone. Functions as a detoxifiying enzyme by reducing a range of toxic aldehydes. Reduces methylglyoxal and 3-deoxyglucosone, which are present at elevated levels under hyperglycemic conditions and are cytotoxic. Involved also in the detoxification of lipid-derived aldehydes like acrolein. Plays a role in the activation of procarcinogens, such as polycyclic aromatic hydrocarbon trans-dihydrodiols, and in the metabolism of various xenobiotics and drugs. Also acts as an inhibitor of protein S-nitrosylation by mediating degradation of S-nitroso-coenzyme A (S-nitroso-CoA), a cofactor required to S-nitrosylate proteins. S-nitroso-CoA reductase activity is involved in reprogramming intermediary metabolism in renal proximal tubules, notably by inhibiting protein S-nitrosylation of isoform 2 of PKM (PKM2). Also acts as a S-nitroso-glutathione reductase by catalyzing the NADPH-dependent reduction of S-nitrosoglutathione. Displays no reductase activity towards retinoids. The protein is Aldo-keto reductase family 1 member A1 of Bos taurus (Bovine).